Reading from the N-terminus, the 287-residue chain is ATP synthase gamma chain (287 aa).

It belongs to the ATPase gamma chain family. F-type ATPases have 2 components, CF(1) - the catalytic core - and CF(0) - the membrane proton channel. CF(1) has five subunits: alpha(3), beta(3), gamma(1), delta(1), epsilon(1). CF(0) has three main subunits: a, b and c.

It is found in the cell membrane. In terms of biological role, produces ATP from ADP in the presence of a proton gradient across the membrane. The gamma chain is believed to be important in regulating ATPase activity and the flow of protons through the CF(0) complex. The protein is ATP synthase gamma chain of Wolbachia sp. subsp. Drosophila simulans (strain wRi).